The chain runs to 324 residues: tRNA pseudouridine synthase B (324 aa).

D49 functions as the Nucleophile in the catalytic mechanism. The segment at 87-107 (RSTDDLEGQPTKTSDKRPSRE) is disordered.

Belongs to the pseudouridine synthase TruB family. Type 1 subfamily.

It carries out the reaction uridine(55) in tRNA = pseudouridine(55) in tRNA. In terms of biological role, responsible for synthesis of pseudouridine from uracil-55 in the psi GC loop of transfer RNAs. The polypeptide is tRNA pseudouridine synthase B (Brucella abortus (strain 2308)).